We begin with the raw amino-acid sequence, 196 residues long: Nitrogen regulatory protein P-II homolog (196 aa).

The transit peptide at Met-1–Ser-61 directs the protein to the chloroplast. Residues Gly-108–Gln-112 and Gly-161–Lys-164 each bind ATP. Gly-110 lines the Mg(2+) pocket.

This sequence belongs to the P(II) protein family. Homodimer. Interacts with NAGK. Interaction with NAGK is dependent of MgATP and inhibited by 2-oxoglutarate, arginine, glutamate, citrate, and oxaloacetate.

The protein resides in the plastid. The protein localises to the chloroplast. In terms of biological role, participates in sensing carbon and organic nitrogen status and regulates some steps of primary carbon and nitrogen metabolism. Required for nitrite uptake in chloroplasts and regulates arginine biosynthesis through interaction with acetylglutamate kinase (NAGK) in chloroplasts. Regulates fatty acids synthesis in chloroplasts by interacting with the acetyl-CoA carboxylase complex and inhibiting acetyl-CoA carboxylase (ACCase) activity. The protein is Nitrogen regulatory protein P-II homolog (GLB1) of Arabidopsis thaliana (Mouse-ear cress).